We begin with the raw amino-acid sequence, 231 residues long: Transmembrane protein 225 (231 aa).

Residues 1–13 lie on the Cytoplasmic side of the membrane; that stretch reads MMRIPNRSIQAAN. Residues 14–34 traverse the membrane as a helical segment; sequence IFFSSGAILLLIAGLIMENWV. Over 35–71 the chain is Extracellular; the sequence is ELIPKVRKDKVTHSPWLGCCPPFWPEESLEAIRRMMM. Residues 72 to 92 traverse the membrane as a helical segment; it reads MSLNISIYLNLIIGLQFTYMI. Residues 93–99 are Cytoplasmic-facing; sequence SQNKCVH. The chain crosses the membrane as a helical span at residues 100–120; it reads LLIGFLSFFTGCLLFYAIIVY. The Extracellular portion of the chain corresponds to 121-139; that stretch reads HHKLNKGQYVYFVNYKTKW. Residues 140-160 traverse the membrane as a helical segment; it reads IVFTIYLTIALFLTCGIFSFI. At 161–231 the chain is on the cytoplasmic side; it reads QCTNRCACMK…LQSRRVTWAL (71 aa). The short motif at 225–229 is the RVxF element; sequence RRVTW.

As to quaternary structure, interacts (via RVxF motif) with PPP1CC. Expressed in testis, specifically in spermatocytes and round spermatids.

The protein resides in the cytoplasmic vesicle. It localises to the secretory vesicle. It is found in the acrosome membrane. In terms of biological role, probably inhibits protein phosphatase 1 (PP1) in sperm via binding to catalytic subunit PPP1CC. This chain is Transmembrane protein 225 (Tmem225), found in Rattus norvegicus (Rat).